Here is a 455-residue protein sequence, read N- to C-terminus: Probable ATP-dependent RNA helicase DDX47 (455 aa).

The interval 1-21 (MAADEEPDSPSGALQTAAEEE) is disordered. Ala2 carries the post-translational modification N-acetylalanine. At Ser9 the chain carries Phosphoserine. Residues 24-52 (KTFKDLGVTDVLCEACDQLGWAKPTKIQI) carry the Q motif motif. A Helicase ATP-binding domain is found at 55-226 (IPLALQGRDI…RAALKNPVKC (172 aa)). 68 to 75 (AETGSGKT) is an ATP binding site. At Thr149 the chain carries Phosphothreonine. The short motif at 174–177 (DEAD) is the DEAD box element. A Helicase C-terminal domain is found at 237–397 (KLQQYYLFIP…VFPTQDEEVM (161 aa)). The disordered stretch occupies residues 412–455 (MELREHGEKKKRKREDAGDDDDKEGAIGVRNKVAGGKMKKRKGR).

It belongs to the DEAD box helicase family. DDX47/RRP3 subfamily. Interacts with AGO1 and AGO2. Interacts with GABARAP. Interacts with NOL8; the interaction is RNA-dependent.

It localises to the nucleus. It is found in the nucleolus. It carries out the reaction ATP + H2O = ADP + phosphate + H(+). Functionally, involved in apoptosis. May have a role in rRNA processing and mRNA splicing. Associates with pre-rRNA precursors. The polypeptide is Probable ATP-dependent RNA helicase DDX47 (Ddx47) (Mus musculus (Mouse)).